The sequence spans 174 residues: Probable inosine/xanthosine triphosphatase (174 aa).

Asp-63 contributes to the Mg(2+) binding site.

The protein belongs to the YjjX NTPase family. As to quaternary structure, homodimer. It depends on Mg(2+) as a cofactor. Requires Mn(2+) as cofactor.

It carries out the reaction XTP + H2O = XDP + phosphate + H(+). The enzyme catalyses ITP + H2O = IDP + phosphate + H(+). Its function is as follows. Phosphatase that hydrolyzes non-canonical purine nucleotides such as XTP and ITP to their respective diphosphate derivatives. Probably excludes non-canonical purines from DNA/RNA precursor pool, thus preventing their incorporation into DNA/RNA and avoiding chromosomal lesions. The chain is Probable inosine/xanthosine triphosphatase from Methanocella arvoryzae (strain DSM 22066 / NBRC 105507 / MRE50).